The chain runs to 188 residues: Large ribosomal subunit protein eL18 (188 aa).

Lys119 participates in a covalent cross-link: Glycyl lysine isopeptide (Lys-Gly) (interchain with G-Cter in SUMO2). Position 130 is a phosphoserine (Ser130). The interval 151–188 is disordered; it reads HFGKAPGTPHSHTKPYVRSKGRKFERARGRRASRGYKN. At Thr158 the chain carries Phosphothreonine. 2 stretches are compositionally biased toward basic residues: residues 161–171 and 178–188; these read SHTKPYVRSKG and RGRRASRGYKN. A Glycyl lysine isopeptide (Lys-Gly) (interchain with G-Cter in SUMO2) cross-link involves residue Lys164.

The protein belongs to the eukaryotic ribosomal protein eL18 family. As to quaternary structure, component of the large ribosomal subunit.

The protein localises to the cytoplasm. Its subcellular location is the cytosol. It is found in the rough endoplasmic reticulum. In terms of biological role, component of the large ribosomal subunit. The ribosome is a large ribonucleoprotein complex responsible for the synthesis of proteins in the cell. This chain is Large ribosomal subunit protein eL18 (RPL18), found in Canis lupus familiaris (Dog).